The sequence spans 576 residues: Non-neuronal cytoplasmic intermediate filament protein (576 aa).

Residues 1–51 (MTSKISTTYEEEGRQSKIQPRAFVITRSGPSSKSSSFSARQSYASSRQSIT) form a disordered region. The interval 2 to 75 (TSKISTTYEE…FRGTREKEKR (74 aa)) is head. A compositionally biased stretch (low complexity) spans 28-49 (SGPSSKSSSFSARQSYASSRQS). Residues 73 to 425 (EKREMQNLNE…KLLEGEESRV (353 aa)) form the IF rod domain. The coil 1A stretch occupies residues 76–108 (EMQNLNERLASYIEKVHFLDAQVKKLEAENEAL). A linker 1 region spans residues 109–122 (RNRKSESLQPIRDA). The interval 123 to 260 (YENELAQARK…DLLDQLELLK (138 aa)) is coil 1B. Residues 261–278 (PEPIQIKGMDYAEFWKSE) are linker 2. A coil 2 region spans residues 279–425 (LSKCVREIQS…KLLEGEESRV (147 aa)). The tail stretch occupies residues 426–576 (GLRSLVEQAI…KATLIAKFSG (151 aa)). The region spanning 456–574 (GSMTIQRSSK…NEKATLIAKF (119 aa)) is the LTD domain.

This sequence belongs to the intermediate filament family. Can form homopolymers.

Its subcellular location is the cytoplasm. This Cornu aspersum (Brown garden snail) protein is Non-neuronal cytoplasmic intermediate filament protein.